Reading from the N-terminus, the 318-residue chain is uncharacterized protein (318 aa).

The stretch at 67-157 forms a coiled coil; sequence LAFDELEKEK…SLKAIQTSQE (91 aa). The tract at residues 172–318 is disordered; the sequence is ESTNKVEKNA…KGFFARLFNL (147 aa). 2 stretches are compositionally biased toward basic and acidic residues: residues 175 to 193 and 219 to 236; these read NKVE…KDSK and KVDK…EKAS. The span at 237-248 shows a compositional bias: polar residues; sequence VEQSKNENAAET. Basic and acidic residues-rich tracts occupy residues 249-274 and 300-310; these read SNKE…HAEA and SEPKPQEEKKG.

This is an uncharacterized protein from Staphylococcus aureus (strain Mu50 / ATCC 700699).